Reading from the N-terminus, the 93-residue chain is DNA-binding protein HU 1 (93 aa).

It belongs to the bacterial histone-like protein family. As to quaternary structure, homodimer.

The protein resides in the cytoplasm. Its subcellular location is the nucleoid. Functionally, histone-like DNA-binding protein which is capable of wrapping DNA to stabilize it, and thus to prevent its denaturation under extreme environmental conditions. The polypeptide is DNA-binding protein HU 1 (hup1) (Streptomyces coelicolor (strain ATCC BAA-471 / A3(2) / M145)).